Here is a 93-residue protein sequence, read N- to C-terminus: Sec-independent protein translocase protein TatA (93 aa).

The chain crosses the membrane as a helical span at residues M1–G21. The interval K44–A93 is disordered. The segment covering S51–P74 has biased composition (low complexity).

This sequence belongs to the TatA/E family. The Tat system comprises two distinct complexes: a TatABC complex, containing multiple copies of TatA, TatB and TatC subunits, and a separate TatA complex, containing only TatA subunits. Substrates initially bind to the TatABC complex, which probably triggers association of the separate TatA complex to form the active translocon.

Its subcellular location is the cell membrane. Its function is as follows. Part of the twin-arginine translocation (Tat) system that transports large folded proteins containing a characteristic twin-arginine motif in their signal peptide across membranes. TatA could form the protein-conducting channel of the Tat system. The protein is Sec-independent protein translocase protein TatA of Rhodococcus opacus (strain B4).